The chain runs to 466 residues: MNQGKIVQIIGAIVDVEFPRNNVPKVYNALKIDGTAIILEVQQQLGDGIVRTIALGSTDGLKRNLIATDTGHAITVPVGTGTLGRIMDVLGNPIDEAGPITYTDQWEIHRNAPSYEDQASTTELLETGIKVIDLMCPFAKGGKVGLFGGAGVGKTVNMMELINNIAKAHSGLSVFAGVGERTREGNDFYHEMKDSNVLDKVAMVYGQMNEPPGNRLRVALTGLTMAEYFRDEKDSSGKGKDVLLFIDNIYRYTLAGTEVSALLGRMPSAVGYQPTLAEEMGVLQERITSTANGSITSIQAVYVPADDLTDPSPATTFGHLDSTVTLSRSIAALGIYPAVDPLDSSSRQMDPLIIGEEHYNTTQRVQQTLQKYKDLKDIIAILGMDELSEDDKLSVSRARKIERFFSQPFHVAEVFTGAPGKYVPLKDTIRGFKAIVDGEYDHLPEQAFYMVGNIEEVIEKANKMTA.

148–155 (GGAGVGKT) is an ATP binding site.

It belongs to the ATPase alpha/beta chains family. F-type ATPases have 2 components, CF(1) - the catalytic core - and CF(0) - the membrane proton channel. CF(1) has five subunits: alpha(3), beta(3), gamma(1), delta(1), epsilon(1). CF(0) has three main subunits: a(1), b(2) and c(9-12). The alpha and beta chains form an alternating ring which encloses part of the gamma chain. CF(1) is attached to CF(0) by a central stalk formed by the gamma and epsilon chains, while a peripheral stalk is formed by the delta and b chains.

It is found in the cell inner membrane. It catalyses the reaction ATP + H2O + 4 H(+)(in) = ADP + phosphate + 5 H(+)(out). Functionally, produces ATP from ADP in the presence of a proton gradient across the membrane. The catalytic sites are hosted primarily by the beta subunits. The polypeptide is ATP synthase subunit beta (Xylella fastidiosa (strain M23)).